Reading from the N-terminus, the 438-residue chain is Ribosomal protein uS12 methylthiotransferase RimO (438 aa).

In terms of domain architecture, MTTase N-terminal spans 4–114 (PRVSFVSLGC…VMNAVHEVAP (111 aa)). The [4Fe-4S] cluster site is built by cysteine 13, cysteine 49, cysteine 78, cysteine 146, cysteine 150, and cysteine 153. In terms of domain architecture, Radical SAM core spans 132 to 370 (LTPRHYAYLK…MAKQQQISTN (239 aa)). The TRAM domain maps to 373 to 438 (KKKVGKRLPV…DAYDLHGTAV (66 aa)).

This sequence belongs to the methylthiotransferase family. RimO subfamily. [4Fe-4S] cluster is required as a cofactor.

The protein resides in the cytoplasm. It carries out the reaction L-aspartate(89)-[ribosomal protein uS12]-hydrogen + (sulfur carrier)-SH + AH2 + 2 S-adenosyl-L-methionine = 3-methylsulfanyl-L-aspartate(89)-[ribosomal protein uS12]-hydrogen + (sulfur carrier)-H + 5'-deoxyadenosine + L-methionine + A + S-adenosyl-L-homocysteine + 2 H(+). In terms of biological role, catalyzes the methylthiolation of an aspartic acid residue of ribosomal protein uS12. The sequence is that of Ribosomal protein uS12 methylthiotransferase RimO from Brucella ovis (strain ATCC 25840 / 63/290 / NCTC 10512).